A 348-amino-acid chain; its full sequence is Holliday junction branch migration complex subunit RuvB (348 aa).

Residues M1–Y183 are large ATPase domain (RuvB-L). Residues L22, R23, G64, K67, T68, T69, E130 to F132, R173, Y183, and R220 contribute to the ATP site. T68 provides a ligand contact to Mg(2+). Residues T184–E254 form a small ATPAse domain (RuvB-S) region. A head domain (RuvB-H) region spans residues A257–R348. Positions 293, 312, and 317 each coordinate DNA. The segment at L329–R348 is disordered.

The protein belongs to the RuvB family. As to quaternary structure, homohexamer. Forms an RuvA(8)-RuvB(12)-Holliday junction (HJ) complex. HJ DNA is sandwiched between 2 RuvA tetramers; dsDNA enters through RuvA and exits via RuvB. An RuvB hexamer assembles on each DNA strand where it exits the tetramer. Each RuvB hexamer is contacted by two RuvA subunits (via domain III) on 2 adjacent RuvB subunits; this complex drives branch migration. In the full resolvosome a probable DNA-RuvA(4)-RuvB(12)-RuvC(2) complex forms which resolves the HJ.

It localises to the cytoplasm. It catalyses the reaction ATP + H2O = ADP + phosphate + H(+). Functionally, the RuvA-RuvB-RuvC complex processes Holliday junction (HJ) DNA during genetic recombination and DNA repair, while the RuvA-RuvB complex plays an important role in the rescue of blocked DNA replication forks via replication fork reversal (RFR). RuvA specifically binds to HJ cruciform DNA, conferring on it an open structure. The RuvB hexamer acts as an ATP-dependent pump, pulling dsDNA into and through the RuvAB complex. RuvB forms 2 homohexamers on either side of HJ DNA bound by 1 or 2 RuvA tetramers; 4 subunits per hexamer contact DNA at a time. Coordinated motions by a converter formed by DNA-disengaged RuvB subunits stimulates ATP hydrolysis and nucleotide exchange. Immobilization of the converter enables RuvB to convert the ATP-contained energy into a lever motion, pulling 2 nucleotides of DNA out of the RuvA tetramer per ATP hydrolyzed, thus driving DNA branch migration. The RuvB motors rotate together with the DNA substrate, which together with the progressing nucleotide cycle form the mechanistic basis for DNA recombination by continuous HJ branch migration. Branch migration allows RuvC to scan DNA until it finds its consensus sequence, where it cleaves and resolves cruciform DNA. This chain is Holliday junction branch migration complex subunit RuvB, found in Nitrobacter winogradskyi (strain ATCC 25391 / DSM 10237 / CIP 104748 / NCIMB 11846 / Nb-255).